Consider the following 427-residue polypeptide: MAAVSPPTRCQALVTFEDVAVTFTDDEWKRLVPVQRALYKAVMLENYESIISLGLPVPRPDVILQFKRRGEPWIRGFHGSEEKTWPESVSLDLETKPETLDASRGTLREIHRKQSSLCPKREIQTLTGGPEPEKESPKARTCKKPLSLDKGLHQMSAPSKKALTKHQDQECSECGKTFFDHSSLIRHQRTHTGEKPYDCPECGKAFSHRSSLSRHLMFHTGESPYECDACGKAFFDRSSLTVHQRIHTGEKPFKCNDCGKAFFDRSSLTRHQRIHTGESPYECQQCGKAFSQKSILTRHLLTHTGRKPYECRDCGKAFYGVTSLNRHQKVHTEEPRYQCSECGKAFFDRSSLTQHQKIHTGDKPYECGECGKAFSQRCRLTRHQRVHTGEKPFECSVCGKEFSSKSSIIQHQRRYAKQGIDRGGSMS.

Residues 14 to 85 form the KRAB domain; the sequence is VTFEDVAVTF…GFHGSEEKTW (72 aa). A disordered region spans residues 111–142; the sequence is HRKQSSLCPKREIQTLTGGPEPEKESPKARTC. 8 C2H2-type zinc fingers span residues 169-191, 197-219, 225-247, 253-275, 281-303, 309-331, 337-359, and 365-387; these read QECS…QRTH, YDCP…LMFH, YECD…QRIH, FKCN…QRIH, YECQ…LLTH, YECR…QKVH, YQCS…QKIH, and YECG…QRVH. The segment at 393-415 adopts a C2H2-type 9; degenerate zinc-finger fold; the sequence is FECSVCGKEFSSKSSIIQHQRRY.

The protein belongs to the krueppel C2H2-type zinc-finger protein family.

Its subcellular location is the nucleus. In terms of biological role, may be involved in transcriptional regulation. The protein is Zinc finger protein 2 of Mus musculus (Mouse).